Reading from the N-terminus, the 823-residue chain is Leucine--tRNA ligase (823 aa).

The short motif at 42 to 52 (PYPSGTLHMGH) is the 'HIGH' region element. The 'KMSKS' region signature appears at 575 to 579 (KMSKS). An ATP-binding site is contributed by Lys-578.

The protein belongs to the class-I aminoacyl-tRNA synthetase family.

The protein resides in the cytoplasm. It catalyses the reaction tRNA(Leu) + L-leucine + ATP = L-leucyl-tRNA(Leu) + AMP + diphosphate. The polypeptide is Leucine--tRNA ligase (Legionella pneumophila (strain Paris)).